The sequence spans 53 residues: Sec-independent protein translocase protein TatA (53 aa).

A helical membrane pass occupies residues methionine 1–alanine 21.

It belongs to the TatA/E family. In terms of assembly, the Tat system comprises two distinct complexes: a TatABC complex, containing multiple copies of TatA, TatB and TatC subunits, and a separate TatA complex, containing only TatA subunits. Substrates initially bind to the TatABC complex, which probably triggers association of the separate TatA complex to form the active translocon.

The protein resides in the cell inner membrane. Functionally, part of the twin-arginine translocation (Tat) system that transports large folded proteins containing a characteristic twin-arginine motif in their signal peptide across membranes. TatA could form the protein-conducting channel of the Tat system. In Rickettsia akari (strain Hartford), this protein is Sec-independent protein translocase protein TatA.